The sequence spans 249 residues: MLKGAWQARIVTLFPEAFPGTLGLSLTGKALEMGLWSLETIDLRPFGEGRHRNVDDNPAGGGAGMVLRADIVARALDAASVGTPPERSRWPVVYLSPRGKPFSQAMARDWAGAEGLTLLCGRFEGVDQRVLDAYAVEEVSLGDFVLTGGEIAAQALIDATVRLIPRVLGNHASTEEESFSEGLLEFPQYTRPTVWQDRTIPEVLLSGHHANIARWRRAEAERLTKERRPDLWRAYCAARGRDPDEDREL.

S-adenosyl-L-methionine contacts are provided by residues G121 and 141–146; that span reads LGDFVL.

Belongs to the RNA methyltransferase TrmD family. As to quaternary structure, homodimer.

The protein localises to the cytoplasm. It catalyses the reaction guanosine(37) in tRNA + S-adenosyl-L-methionine = N(1)-methylguanosine(37) in tRNA + S-adenosyl-L-homocysteine + H(+). In terms of biological role, specifically methylates guanosine-37 in various tRNAs. The protein is tRNA (guanine-N(1)-)-methyltransferase of Cereibacter sphaeroides (strain ATCC 17023 / DSM 158 / JCM 6121 / CCUG 31486 / LMG 2827 / NBRC 12203 / NCIMB 8253 / ATH 2.4.1.) (Rhodobacter sphaeroides).